The sequence spans 454 residues: Neuraminidase (454 aa).

Over methionine 1–lysine 6 the chain is Intravirion. Residues isoleucine 7–glycine 27 traverse the membrane as a helical segment. The involved in apical transport and lipid raft association stretch occupies residues glycine 11–tryptophan 33. The Virion surface portion of the chain corresponds to asparagine 28–lysine 454. A hypervariable stalk region region spans residues histidine 36 to serine 75. N-linked (GlcNAc...) asparagine; by host glycans are attached at residues asparagine 44, asparagine 58, and asparagine 73. The head of neuraminidase stretch occupies residues leucine 76 to lysine 454. Cystine bridges form between cysteine 77/cysteine 402, cysteine 109/cysteine 114, cysteine 169/cysteine 216, cysteine 218/cysteine 223, cysteine 264/cysteine 277, cysteine 266/cysteine 275, cysteine 303/cysteine 320, and cysteine 406/cysteine 431. Arginine 103 contacts substrate. Asparagine 131 carries N-linked (GlcNAc...) asparagine; by host glycosylation. Aspartate 136 acts as the Proton donor/acceptor in catalysis. Residue arginine 137 participates in substrate binding. A glycan (N-linked (GlcNAc...) asparagine; by host) is linked at asparagine 220. Glutamate 262–glutamate 263 is a binding site for substrate. Arginine 278 lines the substrate pocket. 4 residues coordinate Ca(2+): aspartate 279, glycine 283, aspartate 309, and asparagine 329. Arginine 353 lines the substrate pocket. The Nucleophile role is filled by tyrosine 387.

Belongs to the glycosyl hydrolase 34 family. As to quaternary structure, homotetramer. It depends on Ca(2+) as a cofactor. Post-translationally, N-glycosylated.

It localises to the virion membrane. Its subcellular location is the host apical cell membrane. The enzyme catalyses Hydrolysis of alpha-(2-&gt;3)-, alpha-(2-&gt;6)-, alpha-(2-&gt;8)- glycosidic linkages of terminal sialic acid residues in oligosaccharides, glycoproteins, glycolipids, colominic acid and synthetic substrates.. Its activity is regulated as follows. Inhibited by the neuraminidase inhibitors zanamivir (Relenza) and oseltamivir (Tamiflu). These drugs interfere with the release of progeny virus from infected cells and are effective against all influenza strains. Resistance to neuraminidase inhibitors is quite rare. Its function is as follows. Catalyzes the removal of terminal sialic acid residues from viral and cellular glycoconjugates. Cleaves off the terminal sialic acids on the glycosylated HA during virus budding to facilitate virus release. Additionally helps virus spread through the circulation by further removing sialic acids from the cell surface. These cleavages prevent self-aggregation and ensure the efficient spread of the progeny virus from cell to cell. Otherwise, infection would be limited to one round of replication. Described as a receptor-destroying enzyme because it cleaves a terminal sialic acid from the cellular receptors. May facilitate viral invasion of the upper airways by cleaving the sialic acid moieties on the mucin of the airway epithelial cells. Likely to plays a role in the budding process through its association with lipid rafts during intracellular transport. May additionally display a raft-association independent effect on budding. Plays a role in the determination of host range restriction on replication and virulence. Sialidase activity in late endosome/lysosome traffic seems to enhance virus replication. This chain is Neuraminidase, found in Aves (Human).